A 127-amino-acid chain; its full sequence is Fluoride-specific ion channel FluC (127 aa).

Transmembrane regions (helical) follow at residues 4–24, 35–55, 71–91, and 103–123; these read LLLAVFIGGGTGSVARWFLSM, LGTLTANLIGAFIIGVGLAWF, TGFCGGLTTFSTFSAEVVFLL, and IAVNMLGSFAMTALAFWLFSA. Na(+) is bound by residues G75 and T78.

The protein belongs to the fluoride channel Fluc/FEX (TC 1.A.43) family.

The protein resides in the cell inner membrane. The catalysed reaction is fluoride(in) = fluoride(out). Na(+) is not transported, but it plays an essential structural role and its presence is essential for fluoride channel function. Functionally, fluoride-specific ion channel. Important for reducing fluoride concentration in the cell, thus reducing its toxicity. This Enterobacter sp. (strain 638) protein is Fluoride-specific ion channel FluC.